The primary structure comprises 645 residues: Putative bifunctional exonuclease/endonuclease protein MT2247 (645 aa).

In terms of domain architecture, Exonuclease spans 44 to 207 (VVVDLETTGG…DDARATVDVL (164 aa)). The GIY-YIG domain maps to 248-326 (HRPGVYLFRG…LSTHAPPYNR (79 aa)). Residues 603–645 (WQSDLPTEPHPSREQLFGRTGVDCRTGPPQPLLPGRQPFSTAG) are disordered. Residues 635 to 645 (LPGRQPFSTAG) show a composition bias toward low complexity.

This chain is Putative bifunctional exonuclease/endonuclease protein MT2247, found in Mycobacterium tuberculosis (strain CDC 1551 / Oshkosh).